The chain runs to 707 residues: Pheromone-processing carboxypeptidase KEX1 (707 aa).

The N-terminal stretch at 1-17 is a signal peptide; the sequence is MLLSVFIILINTLFVLA. The Lumenal segment spans residues 18–564; the sequence is IPPKEGSDNN…EESTSSKFTR (547 aa). Asn-64 and Asn-121 each carry an N-linked (GlcNAc...) asparagine glycan. Residue Ser-183 is part of the active site. N-linked (GlcNAc...) asparagine glycosylation is found at Asn-293 and Asn-378. Asp-393 is a catalytic residue. 2 N-linked (GlcNAc...) asparagine glycosylation sites follow: Asn-440 and Asn-448. His-451 is an active-site residue. The interval 496-557 is disordered; sequence GQEIPADESS…ASFIPEPEES (62 aa). Basic and acidic residues predominate over residues 503-533; sequence ESSKPIEDKPDDKPIEDKPEETKPEQTKPED. The segment covering 536 to 549 has biased composition (low complexity); the sequence is SSSTSEIIPTSEAS. The helical transmembrane segment at 565–585 threads the bilayer; that stretch reads LIQLGVIFIIFWGVYILYVSY. The Cytoplasmic segment spans residues 586 to 707; that stretch reads RARPSSIIKK…GNPKKTESKS (122 aa). The tract at residues 644–707 is disordered; it reads NTSNRGRYAP…GNPKKTESKS (64 aa). A compositionally biased stretch (acidic residues) spans 683–694; that stretch reads SDDDEDDDEDVE. Basic and acidic residues predominate over residues 695–707; the sequence is THEGNPKKTESKS.

It belongs to the peptidase S10 family.

It is found in the golgi apparatus. Its subcellular location is the trans-Golgi network membrane. The catalysed reaction is Preferential release of a C-terminal arginine or lysine residue.. Protease with a carboxypeptidase B-like function involved in the C-terminal processing of the lysine and arginine residues from protein precursors. Promotes cell fusion and is involved in the programmed cell death. This Candida tropicalis (strain ATCC MYA-3404 / T1) (Yeast) protein is Pheromone-processing carboxypeptidase KEX1 (KEX1).